Here is a 411-residue protein sequence, read N- to C-terminus: Phosphopentomutase (411 aa).

Mn(2+)-binding residues include aspartate 14, aspartate 306, histidine 311, aspartate 347, histidine 348, and histidine 359.

Belongs to the phosphopentomutase family. The cofactor is Mn(2+).

Its subcellular location is the cytoplasm. It catalyses the reaction 2-deoxy-alpha-D-ribose 1-phosphate = 2-deoxy-D-ribose 5-phosphate. It carries out the reaction alpha-D-ribose 1-phosphate = D-ribose 5-phosphate. Its pathway is carbohydrate degradation; 2-deoxy-D-ribose 1-phosphate degradation; D-glyceraldehyde 3-phosphate and acetaldehyde from 2-deoxy-alpha-D-ribose 1-phosphate: step 1/2. Its function is as follows. Isomerase that catalyzes the conversion of deoxy-ribose 1-phosphate (dRib-1-P) and ribose 1-phosphate (Rib-1-P) to deoxy-ribose 5-phosphate (dRib-5-P) and ribose 5-phosphate (Rib-5-P), respectively. This chain is Phosphopentomutase, found in Lactococcus lactis subsp. cremoris (strain SK11).